Here is a 475-residue protein sequence, read N- to C-terminus: Ribulose bisphosphate carboxylase large chain (475 aa).

Positions methionine 1 to valine 2 are excised as a propeptide. Proline 3 is subject to N-acetylproline. At lysine 14 the chain carries N6,N6,N6-trimethyllysine. Asparagine 123 and threonine 173 together coordinate substrate. The active-site Proton acceptor is lysine 175. Substrate is bound at residue lysine 177. Mg(2+) contacts are provided by lysine 201, aspartate 203, and glutamate 204. Lysine 201 carries the post-translational modification N6-carboxylysine. The active-site Proton acceptor is histidine 294. Substrate is bound by residues arginine 295, histidine 327, and serine 379.

This sequence belongs to the RuBisCO large chain family. Type I subfamily. Heterohexadecamer of 8 large chains and 8 small chains. Mg(2+) serves as cofactor.

It localises to the plastid. The protein localises to the chloroplast. The enzyme catalyses 2 (2R)-3-phosphoglycerate + 2 H(+) = D-ribulose 1,5-bisphosphate + CO2 + H2O. It catalyses the reaction D-ribulose 1,5-bisphosphate + O2 = 2-phosphoglycolate + (2R)-3-phosphoglycerate + 2 H(+). Functionally, ruBisCO catalyzes two reactions: the carboxylation of D-ribulose 1,5-bisphosphate, the primary event in carbon dioxide fixation, as well as the oxidative fragmentation of the pentose substrate in the photorespiration process. Both reactions occur simultaneously and in competition at the same active site. The protein is Ribulose bisphosphate carboxylase large chain of Chlamydomonas moewusii (Chlamydomonas eugametos).